Here is an 896-residue protein sequence, read N- to C-terminus: Desmocollin-3 (896 aa).

Residues 1 to 26 (MAAPGSGAPCAELCRQLLLTLVVFSF) form the signal peptide. A propeptide spanning residues 27-134 (ACEACKKEIF…KETVLRRSKR (108 aa)) is cleaved from the precursor. Cadherin domains are found at residues 135 to 242 (RWAP…HPIF), 243 to 354 (TEAV…LPTF), 355 to 471 (RQNA…GPEC), 472 to 579 (SPEV…EILQ), and 580 to 690 (DYLV…ILGK). At 135–690 (RWAPIPCSMQ…RRSADVILGK (556 aa)) the chain is on the extracellular side. An N-linked (GlcNAc...) asparagine glycan is attached at Asn165. N-linked (GlcNAc...) asparagine glycosylation is found at Asn391, Asn546, and Asn629. The helical transmembrane segment at 691 to 711 (WAILAILLGIALLFSILLTLV) threads the bilayer. The Cytoplasmic portion of the chain corresponds to 712-896 (CGIVSARNKK…AALAKTCTKR (185 aa)).

In terms of assembly, may form homodimers. Interacts with DSG1; there is evidence to suggest that the interaction promotes cell-cell adhesion of keratinocytes. In terms of tissue distribution, expressed in stratified epithelia only, such as the epidermis, tongue, esophagus and rumen (at protein level).

It is found in the cell membrane. It localises to the cell junction. The protein resides in the desmosome. The protein localises to the cytoplasm. In terms of biological role, a component of desmosome cell-cell junctions which are required for positive regulation of cellular adhesion. Required for cell-cell adhesion in the epidermis, as a result required for the maintenance of the dermal cohesion and the dermal barrier function. Required for cell-cell adhesion of epithelial cell layers surrounding the telogen hair club, as a result plays an important role in telogen hair shaft anchorage. Essential for successful completion of embryo compaction and embryo development. The protein is Desmocollin-3 (DSC3) of Bos taurus (Bovine).